Consider the following 145-residue polypeptide: MNLVQLGKLHENVLDAGCEPNRNARYLASLGYKVVGIDISERAISKAIDKTSSEKSNVNFNQRDFSRLNEFKGHFDTVIDIGCFHSILNSDHEPYTASLSHICHSDSSVFLRAFSETNKSRYRRWQGHKRYSLALKRNNVKKLSL.

This sequence belongs to the methyltransferase superfamily.

In terms of biological role, probable methyltransferase. This is an uncharacterized protein from Schizosaccharomyces pombe (strain 972 / ATCC 24843) (Fission yeast).